The sequence spans 137 residues: Small ribosomal subunit protein uS11A (137 aa).

S2 carries the post-translational modification N-acetylserine. A disordered region spans residues 117-137 (DVTPVPSDSTRKKGGRRGRRL). A compositionally biased stretch (basic residues) spans 128-137 (KKGGRRGRRL).

Belongs to the universal ribosomal protein uS11 family. In terms of assembly, component of the small ribosomal subunit (SSU). Mature yeast ribosomes consist of a small (40S) and a large (60S) subunit. The 40S small subunit contains 1 molecule of ribosomal RNA (18S rRNA) and 33 different proteins (encoded by 57 genes). The large 60S subunit contains 3 rRNA molecules (25S, 5.8S and 5S rRNA) and 46 different proteins (encoded by 81 genes). uS11 interacts with eS1 forming part of the mRNA exit tunnel. uS11 interacts with snoRNA U3. uS11 interacts with MPP10. Component of the ribosomal small subunit (SSU) processome composed of at least 40 protein subunits and snoRNA U3. Post-translationally, N-terminally acetylated by acetyltransferase NatA.

It is found in the cytoplasm. The protein resides in the nucleus. Its subcellular location is the nucleolus. Component of the ribosome, a large ribonucleoprotein complex responsible for the synthesis of proteins in the cell. The small ribosomal subunit (SSU) binds messenger RNAs (mRNAs) and translates the encoded message by selecting cognate aminoacyl-transfer RNA (tRNA) molecules. The large subunit (LSU) contains the ribosomal catalytic site termed the peptidyl transferase center (PTC), which catalyzes the formation of peptide bonds, thereby polymerizing the amino acids delivered by tRNAs into a polypeptide chain. The nascent polypeptides leave the ribosome through a tunnel in the LSU and interact with protein factors that function in enzymatic processing, targeting, and the membrane insertion of nascent chains at the exit of the ribosomal tunnel. uS11 is involved in nucleolar processing of pre-18S ribosomal RNA and ribosome assembly. The polypeptide is Small ribosomal subunit protein uS11A (Saccharomyces cerevisiae (strain ATCC 204508 / S288c) (Baker's yeast)).